Here is a 285-residue protein sequence, read N- to C-terminus: ATP phosphoribosyltransferase (285 aa).

It belongs to the ATP phosphoribosyltransferase family. Long subfamily. It depends on Mg(2+) as a cofactor.

It is found in the cytoplasm. The catalysed reaction is 1-(5-phospho-beta-D-ribosyl)-ATP + diphosphate = 5-phospho-alpha-D-ribose 1-diphosphate + ATP. It functions in the pathway amino-acid biosynthesis; L-histidine biosynthesis; L-histidine from 5-phospho-alpha-D-ribose 1-diphosphate: step 1/9. With respect to regulation, feedback inhibited by histidine. In terms of biological role, catalyzes the condensation of ATP and 5-phosphoribose 1-diphosphate to form N'-(5'-phosphoribosyl)-ATP (PR-ATP). Has a crucial role in the pathway because the rate of histidine biosynthesis seems to be controlled primarily by regulation of HisG enzymatic activity. This chain is ATP phosphoribosyltransferase, found in Metallosphaera sedula (strain ATCC 51363 / DSM 5348 / JCM 9185 / NBRC 15509 / TH2).